The following is a 232-amino-acid chain: Ubiquinone biosynthesis O-methyltransferase (232 aa).

S-adenosyl-L-methionine-binding residues include R36, G55, D76, and M120.

This sequence belongs to the methyltransferase superfamily. UbiG/COQ3 family.

The enzyme catalyses a 3-demethylubiquinol + S-adenosyl-L-methionine = a ubiquinol + S-adenosyl-L-homocysteine + H(+). It carries out the reaction a 3-(all-trans-polyprenyl)benzene-1,2-diol + S-adenosyl-L-methionine = a 2-methoxy-6-(all-trans-polyprenyl)phenol + S-adenosyl-L-homocysteine + H(+). It functions in the pathway cofactor biosynthesis; ubiquinone biosynthesis. In terms of biological role, O-methyltransferase that catalyzes the 2 O-methylation steps in the ubiquinone biosynthetic pathway. This Burkholderia multivorans (strain ATCC 17616 / 249) protein is Ubiquinone biosynthesis O-methyltransferase.